The chain runs to 394 residues: Probable fatty acyl-CoA transferase Rv3272 (394 aa).

Residue Asp175 is the Nucleophile of the active site.

This sequence belongs to the CoA-transferase III family. As to quaternary structure, homodimer.

In terms of biological role, probably involved in fatty acid metabolism. Binds to fatty acyl-CoAs of varying carbon chain lengths, with the highest binding affinity for palmitoyl-CoA (C16:0). In vitro, alters the cell wall lipid profile and protects mycobacteria from acidic, oxidative and antibiotic stress. May play a significant role in host-pathogen interaction. This chain is Probable fatty acyl-CoA transferase Rv3272, found in Mycobacterium tuberculosis (strain ATCC 25618 / H37Rv).